The sequence spans 425 residues: Probable aminotransferase tcpI (425 aa).

Residue K256 is modified to N6-(pyridoxal phosphate)lysine.

Belongs to the class-I pyridoxal-phosphate-dependent aminotransferase family. Requires pyridoxal 5'-phosphate as cofactor.

It participates in secondary metabolite biosynthesis. Its function is as follows. Probable aminotransferase; part of the gene cluster that mediates the biosynthesis of an unusual class of epipolythiodioxopiperazines (ETPs) lacking the reactive thiol group important for toxicity. Firstly, L-tyrosine is prenylated by tcpD, before undergoing condensation with L-glycine in a reaction catalyzed by the NRPS tcpP leading to the diketopiperazine (DKP) backbone. Afterwards the alpha-carbon of tyrosine is oxidized by the cytochrome P450 tcpC to form a hydroxyl group. However, in contrast other ETP biosynthesis pathways studied so far, tcpC is not able to bishydroxylate the DKP at both alpha-carbon positions, but hydroxylates the alpha-carbon of the tyrosine part and the nitrogen of the glycine part. The next steps involve an alpha,beta-elimination reaction catalyzed by tcpI, a methylation by the methyltransferase tcpN the action of the four enzyme cascade tcpG/K/J/I. Due to a dysfunctional cytochrome P450 monooxygenase tcpC, the pathway leads to the biosynthesis of probable non-toxic metabolites lacking the reactive thiol group. The chain is Probable aminotransferase tcpI from Claviceps purpurea (strain 20.1) (Ergot fungus).